The primary structure comprises 135 residues: Large ribosomal subunit protein bL17 (135 aa).

It belongs to the bacterial ribosomal protein bL17 family. In terms of assembly, part of the 50S ribosomal subunit. Contacts protein L32.

In Listeria monocytogenes serotype 4b (strain CLIP80459), this protein is Large ribosomal subunit protein bL17.